The following is a 442-amino-acid chain: MSLTIFISLATILFSFAEAISVDLNDTSSVDLATSLVADGLLNYYAGQHKGGTIGMFLPPAYWWEAGAAWNGLLNRYIATGNSTYNELVKTSMLYQSGEDSDYMPSNYTTSEGNDDQAFWGLTVISAAEANFSNPAADEPQWLELAQAVFNQQVTRWDTDHCNGGLRWQITEFNSGYNYKNTVSNGAFFQLAARLARFTDNDTYAEWANVAYDWSQRIGFIQEDYTVFDGSSIKDNCSSIEITQWTYNIGLYMAGAAYMYNYTNSTVWKTRVEGFANKTAKTFFFKDIMFEPVCEIALSCNYDQTSFKGFLTRFMVYTAQMAPFTAPLLEPLLISTAKAAAGACCGGYDGVTCGVQWWWNNDTWDGLYGLGEQMSALEAIQAPLLLKSLQVFKASNGGSSTGDPNAGLYTAPVSFANKNFENLRKHWMLLGFFLLVPTLVLY.

Positions 1-19 are cleaved as a signal peptide; it reads MSLTIFISLATILFSFAEA. 10 N-linked (GlcNAc...) asparagine glycosylation sites follow: Asn25, Asn82, Asn107, Asn131, Asn201, Asn236, Asn261, Asn264, Asn277, and Asn361.

Belongs to the glycosyl hydrolase 76 family.

The catalysed reaction is Random hydrolysis of (1-&gt;6)-alpha-D-mannosidic linkages in unbranched (1-&gt;6)-mannans.. The chain is Putative mannan endo-1,6-alpha-mannosidase C970.02 from Schizosaccharomyces pombe (strain 972 / ATCC 24843) (Fission yeast).